A 71-amino-acid chain; its full sequence is Translational regulator CsrA (71 aa).

The tract at residues 50–71 (RIRHEKDGDVPEAAPGQGADPQ) is disordered.

Belongs to the CsrA/RsmA family. As to quaternary structure, homodimer; the beta-strands of each monomer intercalate to form a hydrophobic core, while the alpha-helices form wings that extend away from the core.

The protein resides in the cytoplasm. In terms of biological role, a key translational regulator that binds mRNA to regulate translation initiation and/or mRNA stability. Mediates global changes in gene expression, shifting from rapid growth to stress survival by linking envelope stress, the stringent response and the catabolite repression systems. Usually binds in the 5'-UTR; binding at or near the Shine-Dalgarno sequence prevents ribosome-binding, repressing translation, binding elsewhere in the 5'-UTR can activate translation and/or stabilize the mRNA. Its function is antagonized by small RNA(s). The chain is Translational regulator CsrA from Halorhodospira halophila (strain DSM 244 / SL1) (Ectothiorhodospira halophila (strain DSM 244 / SL1)).